We begin with the raw amino-acid sequence, 103 residues long: Small ribosomal subunit protein uS14c (103 aa).

Positions 34 to 56 are disordered; the sequence is KVSPLSLSEKTKMREKLQSLPRN.

This sequence belongs to the universal ribosomal protein uS14 family. In terms of assembly, part of the 30S ribosomal subunit.

It localises to the plastid. The protein localises to the chloroplast. Its function is as follows. Binds 16S rRNA, required for the assembly of 30S particles. The polypeptide is Small ribosomal subunit protein uS14c (Brachypodium distachyon (Purple false brome)).